A 303-amino-acid chain; its full sequence is 4-hydroxy-tetrahydrodipicolinate synthase (303 aa).

T57 serves as a coordination point for pyruvate. Y143 acts as the Proton donor/acceptor in catalysis. K171 serves as the catalytic Schiff-base intermediate with substrate. Pyruvate is bound at residue I211.

This sequence belongs to the DapA family. As to quaternary structure, homotetramer; dimer of dimers.

The protein resides in the cytoplasm. The catalysed reaction is L-aspartate 4-semialdehyde + pyruvate = (2S,4S)-4-hydroxy-2,3,4,5-tetrahydrodipicolinate + H2O + H(+). It functions in the pathway amino-acid biosynthesis; L-lysine biosynthesis via DAP pathway; (S)-tetrahydrodipicolinate from L-aspartate: step 3/4. Catalyzes the condensation of (S)-aspartate-beta-semialdehyde [(S)-ASA] and pyruvate to 4-hydroxy-tetrahydrodipicolinate (HTPA). In Bifidobacterium animalis subsp. lactis (strain AD011), this protein is 4-hydroxy-tetrahydrodipicolinate synthase.